The sequence spans 313 residues: Olfactory receptor 1D2 (313 aa).

Over 1–25 (MDGGNQSEGSEFLLLGMSESPEQQR) the chain is Extracellular. Residue asparagine 5 is glycosylated (N-linked (GlcNAc...) asparagine). A helical membrane pass occupies residues 26–49 (ILFWMFLSMYLVTVLGNVLIILAI). The Cytoplasmic segment spans residues 50 to 57 (SSDSRLHT). A helical transmembrane segment spans residues 58–79 (PMYFFLANLSFTDLFFVTNTIP). At 80–100 (KMLVNLQSQDKAISYAGCLTQ) the chain is on the extracellular side. A disulfide bond links cysteine 97 and cysteine 189. A helical transmembrane segment spans residues 101 to 120 (LYFLLSLVTLDNLILAVMAY). Residues 121–139 (DRYVAICCPLHYVTAMSPR) are Cytoplasmic-facing. Residues 140 to 158 (LCILLLSLCWVFSVLYGLI) traverse the membrane as a helical segment. Over 159-196 (HTLLMTRVTFCGSRKIHYLFCEMYFLLRLACSNIQINH) the chain is Extracellular. An N-linked (GlcNAc...) asparagine glycan is attached at asparagine 195. A helical transmembrane segment spans residues 197-219 (TVLXATGCFIFLIPLGFMIXSYA). Residues 220-236 (RIVRAILRIPSATGKYK) are Cytoplasmic-facing. A helical membrane pass occupies residues 237–259 (AFSTCASHLAVVSLFYGTLGMVY). Over 260–271 (LQPLQTYSTKDS) the chain is Extracellular. A helical membrane pass occupies residues 272–291 (VATVMYAVVTPMMNPFIYSL). At 292-313 (RNKDIHGALGRLLQGKAFQKLT) the chain is on the cytoplasmic side.

The protein belongs to the G-protein coupled receptor 1 family.

It localises to the cell membrane. Odorant receptor. The protein is Olfactory receptor 1D2 (OR1D2) of Pongo pygmaeus (Bornean orangutan).